Consider the following 144-residue polypeptide: Universal stress protein A homolog 1 (144 aa).

The protein belongs to the universal stress protein A family. Homodimer.

It is found in the cytoplasm. Its function is as follows. Involved in stress response. The sequence is that of Universal stress protein A homolog 1 (uspA1) from Coxiella burnetii (strain RSA 493 / Nine Mile phase I).